Here is a 377-residue protein sequence, read N- to C-terminus: Circumsporozoite protein (377 aa).

A signal peptide spans 1–22 (MKNFILLAVSSILLVDLFPTHC). The interval 51 to 294 (HVGQSASRGR…NNEGANAPNE (244 aa)) is disordered. The span at 72 to 100 (DAKKKKDGKKAEPKNPRENKLKQPGDRAD) shows a compositional bias: basic and acidic residues. Positions 80–88 (KKAEPKNPR) are required for the binding to heparan sulfate proteoglycans (HSPGs) on the surface of host hepatocytes. Residues 91-95 (KLKQP) are region I; contains the proteolytic cleavage site. 20 tandem repeats follow at residues 95–103 (PGDRADGQP), 104–112 (AGDRADGQP), 113–121 (AGDRADGQP), 122–130 (AGDRADGQP), 131–139 (AGDRAAGQP), 140–148 (AGDRADGQP), 149–157 (AGDRADGQP), 158–166 (AGDRADGQP), 167–175 (AGDRADGQP), 176–184 (AGDRAAGQP), 185–193 (AGDRAAGQP), 194–202 (AGDRADGQP), 203–211 (AGDRAAGQP), 212–220 (AGDRADGQP), 221–229 (AGDRAAGQP), 230–238 (AGDRADGQP), 239–247 (AGDRAAGQP), 248–256 (AGDRAAGQP), 257–265 (AGDRAAGQA), and 266–274 (AGDRAAGQA). Positions 95–274 (PGDRADGQPA…AAGDRAAGQA (180 aa)) are 20 X 9 AA tandem repeats of [PA]-G-D-R-A-[DA]-G-Q-[PA]. Positions 236-273 (GQPAGDRAAGQPAGDRAAGQPAGDRAAGQAAGDRAAGQ) are enriched in low complexity. Positions 274-283 (AAGGNAGGQG) are enriched in gly residues. A compositionally biased stretch (low complexity) spans 284–293 (QNNEGANAPN). The TSP type-1 domain maps to 303–355 (KVRATVGTEWTPCSVTCGVGVRVRRRVNAANKKPEDLTLNDLETDVCTMDKCA). Cystine bridges form between C315-C349 and C319-C354. Residue T318 is glycosylated (O-linked (Fuc) threonine). C354 carries the GPI-anchor amidated cysteine lipid modification. The propeptide at 355-377 (AGIFNVVSNSLGLVILLVLALFN) is removed in mature form.

It belongs to the plasmodium circumsporozoite protein family. In terms of processing, during host cell invasion, proteolytically cleaved at the cell membrane in the region I by a papain-like cysteine protease of parasite origin. Cleavage is triggered by the sporozoite contact with highly sulfated heparan sulfate proteoglycans (HSPGs) present on the host hepatocyte cell surface. Cleavage exposes the TSP type-1 (TSR) domain and is required for productive invasion of host hepatocytes but not for adhesion to the host cell membrane. Cleavage is dispensable for sporozoite development in the oocyst, motility and for traversal of host and vector cells. Post-translationally, O-glycosylated; maybe by POFUT2.

It localises to the cell membrane. The protein localises to the cytoplasm. Essential sporozoite protein. In the mosquito vector, required for sporozoite development in the oocyst, migration through the vector hemolymph and entry into the vector salivary glands. In the vertebrate host, required for sporozoite migration through the host dermis and infection of host hepatocytes. Binds to highly sulfated heparan sulfate proteoglycans (HSPGs) on the surface of host hepatocytes. Its function is as follows. In the vertebrate host, binds to highly sulfated heparan sulfate proteoglycans (HSPGs) on the surface of host hepatocytes and is required for sporozoite invasion of the host hepatocytes. The protein is Circumsporozoite protein of Plasmodium vivax (strain Salvador I).